A 463-amino-acid chain; its full sequence is ATP synthase subunit beta (463 aa).

152–159 (GGAGVGKT) provides a ligand contact to ATP.

It belongs to the ATPase alpha/beta chains family. In terms of assembly, F-type ATPases have 2 components, CF(1) - the catalytic core - and CF(0) - the membrane proton channel. CF(1) has five subunits: alpha(3), beta(3), gamma(1), delta(1), epsilon(1). CF(0) has three main subunits: a(1), b(2) and c(9-12). The alpha and beta chains form an alternating ring which encloses part of the gamma chain. CF(1) is attached to CF(0) by a central stalk formed by the gamma and epsilon chains, while a peripheral stalk is formed by the delta and b chains.

The protein resides in the cell inner membrane. It catalyses the reaction ATP + H2O + 4 H(+)(in) = ADP + phosphate + 5 H(+)(out). Its function is as follows. Produces ATP from ADP in the presence of a proton gradient across the membrane. The catalytic sites are hosted primarily by the beta subunits. This Shewanella sp. (strain ANA-3) protein is ATP synthase subunit beta.